We begin with the raw amino-acid sequence, 284 residues long: 4-diphosphocytidyl-2-C-methyl-D-erythritol kinase (284 aa).

Lys-14 is a catalytic residue. 98–108 lines the ATP pocket; the sequence is PMGGGLGGGSS. Asp-140 is an active-site residue.

The protein belongs to the GHMP kinase family. IspE subfamily.

It catalyses the reaction 4-CDP-2-C-methyl-D-erythritol + ATP = 4-CDP-2-C-methyl-D-erythritol 2-phosphate + ADP + H(+). It functions in the pathway isoprenoid biosynthesis; isopentenyl diphosphate biosynthesis via DXP pathway; isopentenyl diphosphate from 1-deoxy-D-xylulose 5-phosphate: step 3/6. Its function is as follows. Catalyzes the phosphorylation of the position 2 hydroxy group of 4-diphosphocytidyl-2C-methyl-D-erythritol. This is 4-diphosphocytidyl-2-C-methyl-D-erythritol kinase from Shewanella sp. (strain ANA-3).